Here is a 345-residue protein sequence, read N- to C-terminus: Sesquiterpene synthase PILCRDRAFT_825684 (345 aa).

The Mg(2+) site is built by Asp91, Asn226, Ser230, and Glu234. The DDXXD motif signature appears at 91–95 (DELTD). Residues Arg316 and Tyr317 each coordinate (2E,6E)-farnesyl diphosphate.

This sequence belongs to the terpene synthase family. The cofactor is Mg(2+).

The enzyme catalyses (2E,6E)-farnesyl diphosphate = viridiflorene + diphosphate. Functionally, terpene cyclase that catalyzes the cyclization of farnesyl diphosphate (FPP) to various sesquiterpenes, including beta-elemene, viridiflorene and gamma-cadinene. Gamma-cadinene is the major product of PILCRDRAFT_825684. The polypeptide is Sesquiterpene synthase PILCRDRAFT_825684 (Piloderma croceum (strain F 1598)).